A 51-amino-acid polypeptide reads, in one-letter code: rpoE leader peptide (51 aa).

Its function is as follows. A short protein whose stop codon overlaps with the start codon of downstream rpoE; a premature stop codon at position 12 results in decreased expression of ECF sigma factor RpoE, thus they are translationally coupled. This is rpoE leader peptide from Escherichia coli (strain K12).